The following is a 354-amino-acid chain: Methionine import ATP-binding protein MetN (354 aa).

The region spanning 8 to 250 (LDHIDITFRQ…PKEALTQEFI (243 aa)) is the ABC transporter domain. An ATP-binding site is contributed by 42-49 (GYSGAGKS).

The protein belongs to the ABC transporter superfamily. Methionine importer (TC 3.A.1.24) family. In terms of assembly, the complex is composed of two ATP-binding proteins (MetN), two transmembrane proteins (MetI) and a solute-binding protein (MetQ).

It is found in the cell membrane. The enzyme catalyses L-methionine(out) + ATP + H2O = L-methionine(in) + ADP + phosphate + H(+). It catalyses the reaction D-methionine(out) + ATP + H2O = D-methionine(in) + ADP + phosphate + H(+). Part of the ABC transporter complex MetNIQ involved in methionine import. Responsible for energy coupling to the transport system. This is Methionine import ATP-binding protein MetN from Streptococcus pyogenes serotype M1.